A 191-amino-acid polypeptide reads, in one-letter code: MLKKTLAALALGSALFTAGQAMAADYKIDKEGQHAFIEFRIKHLGYSWLYGRFNDFDGSFTFDEKNPSADKVKVTINTNSVDTNHAERDKHLRSGDFLNVSKNPTATFESTEVKANGDSADITGNLTLNGVTKPVTIKAKLIGQGDDPWGGYRAGFEGSATLKLKDFGIKMDLGPASQEVELLLSVEGIRQ.

The first 23 residues, 1–23 (MLKKTLAALALGSALFTAGQAMA), serve as a signal peptide directing secretion.

The protein belongs to the UPF0312 family. Type 1 subfamily.

It localises to the periplasm. In Pseudomonas aeruginosa (strain ATCC 15692 / DSM 22644 / CIP 104116 / JCM 14847 / LMG 12228 / 1C / PRS 101 / PAO1), this protein is UPF0312 protein PA0423.